The sequence spans 656 residues: Pentatricopeptide repeat-containing protein At1g62260, mitochondrial (656 aa).

15 PPR repeats span residues 70 to 104 (NTVT…DVVT), 105 to 134 (WNTM…MPSR), 135 to 169 (DSFS…NAVS), 170 to 200 (WSAM…DSSP), 203 to 227 (ALVA…YGSL), 234 to 264 (LVYA…IPDL), 280 to 310 (NVVS…MKDR), 311 to 345 (DTIS…DAHS), 346 to 372 (WNMM…TPEK), 373 to 407 (HTVS…GEKP), 408 to 438 (DPHT…VVKT), 442 to 472 (DVPV…MKLK), 474 to 508 (EVIT…GIYP), 509 to 544 (SHIT…KIEP), and 545 to 575 (QMEH…MPFE). A type E motif region spans residues 580-655 (VWGALLDACR…ERGSSWVDSS (76 aa)).

Belongs to the PPR family. PCMP-E subfamily.

Its subcellular location is the mitochondrion. This chain is Pentatricopeptide repeat-containing protein At1g62260, mitochondrial (PCMP-E10), found in Arabidopsis thaliana (Mouse-ear cress).